A 374-amino-acid chain; its full sequence is Flap endonuclease 1 (374 aa).

An N-domain region spans residues 1–105 (MGIKGLTALI…ELLQKRFGRR (105 aa)). Residue Asp34 coordinates Mg(2+). The DNA site is built by Arg47 and Arg71. Residue Asp87 coordinates Mg(2+). The tract at residues 103 to 122 (GRREEAREQEEEQKDVADAE) is disordered. Residues 123 to 254 (KMDQLARRQV…KTALKLIREH (132 aa)) are I-domain. Mg(2+) contacts are provided by Glu159, Glu161, Asp180, and Asp182. Position 159 (Glu159) interacts with DNA. Residues Gly232 and Asp234 each coordinate DNA. Asp234 serves as a coordination point for Mg(2+). The interval 335–374 (SLSQKQQGRLDGFFTVKPGSAPPKRKAEDDKKNVKKKGKK) is disordered. Positions 340-348 (QQGRLDGFF) are interaction with PCNA.

It belongs to the XPG/RAD2 endonuclease family. FEN1 subfamily. Interacts with PCNA. Three molecules of FEN1 bind to one PCNA trimer with each molecule binding to one PCNA monomer. PCNA stimulates the nuclease activity without altering cleavage specificity. Requires Mg(2+) as cofactor. Post-translationally, phosphorylated. Phosphorylation upon DNA damage induces relocalization to the nuclear plasma.

The protein localises to the nucleus. It is found in the nucleolus. It localises to the nucleoplasm. The protein resides in the mitochondrion. Functionally, structure-specific nuclease with 5'-flap endonuclease and 5'-3' exonuclease activities involved in DNA replication and repair. During DNA replication, cleaves the 5'-overhanging flap structure that is generated by displacement synthesis when DNA polymerase encounters the 5'-end of a downstream Okazaki fragment. It enters the flap from the 5'-end and then tracks to cleave the flap base, leaving a nick for ligation. Also involved in the long patch base excision repair (LP-BER) pathway, by cleaving within the apurinic/apyrimidinic (AP) site-terminated flap. Acts as a genome stabilization factor that prevents flaps from equilibrating into structures that lead to duplications and deletions. Also possesses 5'-3' exonuclease activity on nicked or gapped double-stranded DNA, and exhibits RNase H activity. Also involved in replication and repair of rDNA and in repairing mitochondrial DNA. This is Flap endonuclease 1 from Mycosarcoma maydis (Corn smut fungus).